A 494-amino-acid chain; its full sequence is Zinc finger and SCAN domain-containing protein 30 (494 aa).

Residues 48-130 (RQKFRQFSYS…TMLEELEKEL (83 aa)) form the SCAN box domain. Lysine 197 participates in a covalent cross-link: Glycyl lysine isopeptide (Lys-Gly) (interchain with G-Cter in SUMO2). C2H2-type zinc fingers lie at residues 301–323 (YECFDCGKAFCQSSKLIRHQRIH), 329–351 (YACKECGKAFSLSSDLVRHQRIH), 357–379 (YECCECGKAFRGSSELIRHRRIH), 385–407 (YECGECGKAFSRSSALIQHKKIH), 413–435 (YECIACGKAFGRSSILIEHQRIH), 441–463 (YECNECGKSFNQSSALTQHQRIH), and 469–491 (YECSECRKTFRHRSGLMQHQRTH).

It belongs to the krueppel C2H2-type zinc-finger protein family.

It is found in the nucleus. In terms of biological role, may be involved in transcriptional regulation. This Homo sapiens (Human) protein is Zinc finger and SCAN domain-containing protein 30 (ZSCAN30).